The following is a 419-amino-acid chain: Tyrosine--tRNA ligase (419 aa).

Residue Tyr34 coordinates L-tyrosine. The 'HIGH' region signature appears at 39 to 48 (PSGDSMHIGH). Residues Tyr168 and Gln172 each coordinate L-tyrosine. A 'KMSKS' region motif is present at residues 230–234 (KFGKS). Lys233 serves as a coordination point for ATP. One can recognise an S4 RNA-binding domain in the interval 352 to 418 (ANLVDWLVTL…GKKKYFLVSY (67 aa)).

The protein belongs to the class-I aminoacyl-tRNA synthetase family. TyrS type 1 subfamily. Homodimer.

It is found in the cytoplasm. The enzyme catalyses tRNA(Tyr) + L-tyrosine + ATP = L-tyrosyl-tRNA(Tyr) + AMP + diphosphate + H(+). Catalyzes the attachment of tyrosine to tRNA(Tyr) in a two-step reaction: tyrosine is first activated by ATP to form Tyr-AMP and then transferred to the acceptor end of tRNA(Tyr). The polypeptide is Tyrosine--tRNA ligase (Listeria monocytogenes serotype 4a (strain HCC23)).